Here is a 218-residue protein sequence, read N- to C-terminus: Leucine-rich repeat protein 1 (218 aa).

The N-terminal stretch at 1 to 27 is a signal peptide; sequence MASRNYRWELFAASLTLTLALIHLVEA. LRR repeat units lie at residues 94-117, 119-140, 141-165, and 167-190; these read EHLQ…LGNL, NLIS…SLGK, LKSL…LTAI, and SLKV…PFAH.

In terms of assembly, interacts with HIR1.

Functionally, involved in plant defense response. This is Leucine-rich repeat protein 1 from Arabidopsis thaliana (Mouse-ear cress).